A 400-amino-acid polypeptide reads, in one-letter code: Probable peptidoglycan glycosyltransferase FtsW (400 aa).

Residues 1 to 29 (MVIERIKHLASPLQDWVFTPSPKVMFDRQ) are Cytoplasmic-facing. Residues 30–50 (LIWIALGLMLTGLVMVASASF) traverse the membrane as a helical segment. Residues 51 to 60 (PISTRLTGQP) are Periplasmic-facing. A helical transmembrane segment spans residues 61 to 81 (FHFMMRHMLFVFLALSISSIV). Topologically, residues 82–95 (LRIELNKWLKYSSH) are cytoplasmic. The chain crosses the membrane as a helical span at residues 96-116 (LLLISLLLLAAVLVVGKSVNG). Over 117 to 122 (AARWLP) the chain is Periplasmic. Residues 123 to 143 (LGIFNLQPAEVAKLSLFVFIA) form a helical membrane-spanning segment. Topologically, residues 144 to 155 (GYLVRRHGEVRD) are cytoplasmic. The helical transmembrane segment at 156 to 176 (SFRGFVKPLLVLITLAFFLLM) threads the bilayer. The Periplasmic segment spans residues 177-178 (QP). A helical membrane pass occupies residues 179–199 (DLGTTVVMFVTTIAMLFIAGA). Position 200 (Lys200) is a topological domain, cytoplasmic. The chain crosses the membrane as a helical span at residues 201 to 221 (LWQFIALVMGGISLVIVLILA). Residues 222–290 (EPYRMRRVTS…VFAVIAEELG (69 aa)) lie on the Periplasmic side of the membrane. A helical transmembrane segment spans residues 291–311 (FVGVCLVLCLIFALVFKALLI). The Cytoplasmic segment spans residues 312–321 (GRKCLAHDQR). A helical transmembrane segment spans residues 322-342 (FGGFLAFGIGIWFAFQTLVNV). The Periplasmic segment spans residues 343 to 356 (GAAAGIVPTKGLTL). A helical transmembrane segment spans residues 357 to 377 (PLISYGGSSLIIMSVAVSLLI). Residues 378–400 (RIDHECRVYLANEPPRSENEEQK) are Cytoplasmic-facing.

It belongs to the SEDS family. FtsW subfamily.

The protein resides in the cell inner membrane. The enzyme catalyses [GlcNAc-(1-&gt;4)-Mur2Ac(oyl-L-Ala-gamma-D-Glu-L-Lys-D-Ala-D-Ala)](n)-di-trans,octa-cis-undecaprenyl diphosphate + beta-D-GlcNAc-(1-&gt;4)-Mur2Ac(oyl-L-Ala-gamma-D-Glu-L-Lys-D-Ala-D-Ala)-di-trans,octa-cis-undecaprenyl diphosphate = [GlcNAc-(1-&gt;4)-Mur2Ac(oyl-L-Ala-gamma-D-Glu-L-Lys-D-Ala-D-Ala)](n+1)-di-trans,octa-cis-undecaprenyl diphosphate + di-trans,octa-cis-undecaprenyl diphosphate + H(+). The protein operates within cell wall biogenesis; peptidoglycan biosynthesis. Functionally, peptidoglycan polymerase that is essential for cell division. In Aliivibrio salmonicida (strain LFI1238) (Vibrio salmonicida (strain LFI1238)), this protein is Probable peptidoglycan glycosyltransferase FtsW.